A 495-amino-acid chain; its full sequence is Cytochrome P450 monooxygenase BOA4 (495 aa).

Residues Leu-12–Phe-31 form a helical membrane-spanning segment. N-linked (GlcNAc...) asparagine glycosylation occurs at Asn-115. Position 439 (Cys-439) interacts with heme.

It belongs to the cytochrome P450 family. It depends on heme as a cofactor.

The protein localises to the membrane. It participates in polyketide biosynthesis. Its function is as follows. Cytochrome P450 monooxygenase; part of the gene cluster A that mediates the biosynthesis of botcinic acid and its botcinin derivatives, acetate-derived polyketides that contribute to virulence when combined with the sesquiterpene botrydial. Botcinic acid and its derivatives have been shown to induce chlorosis and necrosis during host plant infection, but also have antifungal activities. Two polyketide synthases, BOA6 and BOA9, are involved in the biosynthesis of botcinins. BOA6 mediates the formation of the per-methylated tetraketide core by condensation of four units of malonyl-CoA with one unit of acetyl-CoA, which would be methylated in activated methylene groups to yield a bicyclic acid intermediate that could then either be converted to botrylactone derivatives or lose the starter acetate unit through a retro-Claisen type C-C bond cleavage to yield botcinin derivatives. The second polyketide synthase, BOA9, is probably required for the biosynthesis of the tetraketide side chain of botcinins. The methyltransferase (MT) domain within BOA6 is probably responsible for the incorporation of four methyl groups. The trans-enoyl reductase BOA5 might take over the enoyl reductase function of BOA6 that misses an ER domain. The monooxygenases BOA2, BOA3 and BOA4 might be involved in further hydroxylations at C4, C5 and C8, whereas BOA7, close to BOA9, could potentially be involved in the hydroxylation at C4 in the side chain of botcinins. This chain is Cytochrome P450 monooxygenase BOA4, found in Botryotinia fuckeliana (strain B05.10) (Noble rot fungus).